A 188-amino-acid chain; its full sequence is RxLR effector protein Avh241 (188 aa).

The N-terminal stretch at 1-16 is a signal peptide; sequence MRQYCLLLIVLALAAA. The short motif at 43–58 is the RxLR-dEER element; sequence RLLRSEPQDEDTFEDR. The Host plasma membrane localization motif motif lies at 73 to 78; the sequence is GAAKAK.

It belongs to the RxLR effector family.

The protein localises to the secreted. Its subcellular location is the host cell membrane. Effector that triggers cell death in a variety of plant species (including tobacco, tomato and soybean), regardless of the Rps genes present. Avh241 interacts with the plant immune system via at least two different mechanisms, one recognized by plants dependent on subcellular localization and one promoting infection independent on membrane localization. The cell death triggered by Avh241 in N.benthamiana requires the two host mitogen-activated protein kinases, MEK2 and WIPK. This chain is RxLR effector protein Avh241, found in Phytophthora sojae (strain P6497) (Soybean stem and root rot agent).